A 275-amino-acid polypeptide reads, in one-letter code: Ribosomal RNA small subunit methyltransferase A (275 aa).

S-adenosyl-L-methionine-binding residues include N28, L30, G55, E77, D103, and N123.

Belongs to the class I-like SAM-binding methyltransferase superfamily. rRNA adenine N(6)-methyltransferase family. RsmA subfamily.

The protein resides in the cytoplasm. It carries out the reaction adenosine(1518)/adenosine(1519) in 16S rRNA + 4 S-adenosyl-L-methionine = N(6)-dimethyladenosine(1518)/N(6)-dimethyladenosine(1519) in 16S rRNA + 4 S-adenosyl-L-homocysteine + 4 H(+). Functionally, specifically dimethylates two adjacent adenosines (A1518 and A1519) in the loop of a conserved hairpin near the 3'-end of 16S rRNA in the 30S particle. May play a critical role in biogenesis of 30S subunits. The sequence is that of Ribosomal RNA small subunit methyltransferase A from Rhizobium etli (strain ATCC 51251 / DSM 11541 / JCM 21823 / NBRC 15573 / CFN 42).